Consider the following 302-residue polypeptide: Sulfate adenylyltransferase subunit 2 (302 aa).

This sequence belongs to the PAPS reductase family. CysD subfamily. As to quaternary structure, heterodimer composed of CysD, the smaller subunit, and CysN.

The catalysed reaction is sulfate + ATP + H(+) = adenosine 5'-phosphosulfate + diphosphate. The protein operates within sulfur metabolism; hydrogen sulfide biosynthesis; sulfite from sulfate: step 1/3. With CysN forms the ATP sulfurylase (ATPS) that catalyzes the adenylation of sulfate producing adenosine 5'-phosphosulfate (APS) and diphosphate, the first enzymatic step in sulfur assimilation pathway. APS synthesis involves the formation of a high-energy phosphoric-sulfuric acid anhydride bond driven by GTP hydrolysis by CysN coupled to ATP hydrolysis by CysD. This Bacteroides thetaiotaomicron (strain ATCC 29148 / DSM 2079 / JCM 5827 / CCUG 10774 / NCTC 10582 / VPI-5482 / E50) protein is Sulfate adenylyltransferase subunit 2.